We begin with the raw amino-acid sequence, 259 residues long: Nuclear egress protein 1 (259 aa).

The CCCH-type zinc finger occupies 80–184; it reads CLDLSPYANE…YVVFQTRTLH (105 aa).

Belongs to the herpesviridae NEC1 protein family. Forms a heterohexameric complex with NEC2. Interacts with capsid vertex specific component 2/CVC2; this interaction directs the capsid to the host inner nuclear membrane to initiate budding. Phosphorylated at serine residues in the N-terminus. This phosphorylation regulates the localization within the inner nuclear membrane.

It is found in the host nucleus inner membrane. Its function is as follows. Plays an essential role in virion nuclear egress, the first step of virion release from infected cell. Within the host nucleus, NEC1 interacts with the newly formed capsid through the vertexes and directs it to the inner nuclear membrane by associating with NEC2. Induces the budding of the capsid at the inner nuclear membrane as well as its envelopment into the perinuclear space. There, the NEC1/NEC2 complex promotes the fusion of the enveloped capsid with the outer nuclear membrane and the subsequent release of the viral capsid into the cytoplasm where it will reach the secondary budding sites in the host Golgi or trans-Golgi network. This is Nuclear egress protein 1 from Homo sapiens (Human).